Here is a 147-residue protein sequence, read N- to C-terminus: Hemoglobin subunit epsilon (147 aa).

The Globin domain maps to 3-147; sequence HFTAEEKAAI…VAIALGHKYH (145 aa). Phosphoserine occurs at positions 14 and 51. Residues His-64 and His-93 each contribute to the heme b site.

The protein belongs to the globin family. As to quaternary structure, heterotetramer of two alpha chains and two epsilon chains in early embryonic hemoglobin Gower-2; two zeta chains and two epsilon chains in early embryonic hemoglobin Gower-1. As to expression, red blood cells.

The epsilon chain is a beta-type chain of early mammalian embryonic hemoglobin. In Leontopithecus rosalia (Golden lion tamarin), this protein is Hemoglobin subunit epsilon (HBE1).